Reading from the N-terminus, the 224-residue chain is Inner membrane-spanning protein YciB (224 aa).

6 helical membrane-spanning segments follow: residues 20 to 40, 61 to 81, 86 to 106, 123 to 143, 156 to 176, and 187 to 207; these read GVNPVLKLVLELGPLLVFFFA, IFVATGLFMAATAIALIASWL, LPIMPMVSGVVVFIFGALTLY, LFGGVLLGGLYFGRSLLGYVF, KLTFRWGLFFLFLAVVNEVVW, and FKVWGIMPITLLFTFSQMPLI.

The protein belongs to the YciB family.

The protein localises to the cell inner membrane. Its function is as follows. Plays a role in cell envelope biogenesis, maintenance of cell envelope integrity and membrane homeostasis. The sequence is that of Inner membrane-spanning protein YciB from Mesorhizobium japonicum (strain LMG 29417 / CECT 9101 / MAFF 303099) (Mesorhizobium loti (strain MAFF 303099)).